Reading from the N-terminus, the 750-residue chain is Photosystem I P700 chlorophyll a apoprotein A1 (750 aa).

8 helical membrane-spanning segments follow: residues 70–93 (VFSAHFGQLSIIFLWLSGMYFHGA), 156–179 (LYCTAIGALVFAALMLFAGWFHYH), 195–219 (LNHHLAGLLGLGSLSWAGHQVHVSL), 291–309 (IAHHHLAIAILFLIAGHMY), 346–369 (WHAQLSLNLAMLGSLTIVVAHHMY), 385–411 (LSLFTHHMWIGGFLIVGAAAHAAIFMV), 433–455 (AIISHLNWVCIFLGFHSFGLYIH), and 531–549 (FLVHHIHAFTIHVTVLILL). Cysteine 573 and cysteine 582 together coordinate [4Fe-4S] cluster. 2 helical membrane passes run 589-610 (HVFLGLFWMYNAISVVIFHFSW) and 664-686 (LSAYGLFFLGAHFVWAFSLMFLF). Histidine 675 contributes to the chlorophyll a' binding site. Methionine 683 and tyrosine 691 together coordinate chlorophyll a. Tryptophan 692 serves as a coordination point for phylloquinone. Residues 724 to 744 (AVGVTHYLLGGIATTWAFFLA) form a helical membrane-spanning segment.

The protein belongs to the PsaA/PsaB family. In terms of assembly, the PsaA/B heterodimer binds the P700 chlorophyll special pair and subsequent electron acceptors. PSI consists of a core antenna complex that captures photons, and an electron transfer chain that converts photonic excitation into a charge separation. The eukaryotic PSI reaction center is composed of at least 11 subunits. P700 is a chlorophyll a/chlorophyll a' dimer, A0 is one or more chlorophyll a, A1 is one or both phylloquinones and FX is a shared 4Fe-4S iron-sulfur center. serves as cofactor.

It is found in the plastid. The protein localises to the chloroplast thylakoid membrane. It catalyses the reaction reduced [plastocyanin] + hnu + oxidized [2Fe-2S]-[ferredoxin] = oxidized [plastocyanin] + reduced [2Fe-2S]-[ferredoxin]. PsaA and PsaB bind P700, the primary electron donor of photosystem I (PSI), as well as the electron acceptors A0, A1 and FX. PSI is a plastocyanin-ferredoxin oxidoreductase, converting photonic excitation into a charge separation, which transfers an electron from the donor P700 chlorophyll pair to the spectroscopically characterized acceptors A0, A1, FX, FA and FB in turn. Oxidized P700 is reduced on the lumenal side of the thylakoid membrane by plastocyanin. The protein is Photosystem I P700 chlorophyll a apoprotein A1 of Aethionema cordifolium (Lebanon stonecress).